A 341-amino-acid polypeptide reads, in one-letter code: Anthranilate phosphoribosyltransferase (341 aa).

5-phospho-alpha-D-ribose 1-diphosphate contacts are provided by residues glycine 80, 83 to 84 (GD), threonine 88, 90 to 93 (NIST), 108 to 116 (KHGNYSVSS), and serine 120. Anthranilate is bound at residue glycine 80. Serine 92 contributes to the Mg(2+) binding site. Asparagine 111 is a binding site for anthranilate. Position 166 (arginine 166) interacts with anthranilate. 2 residues coordinate Mg(2+): aspartate 224 and glutamate 225.

It belongs to the anthranilate phosphoribosyltransferase family. As to quaternary structure, homodimer. Mg(2+) is required as a cofactor.

It carries out the reaction N-(5-phospho-beta-D-ribosyl)anthranilate + diphosphate = 5-phospho-alpha-D-ribose 1-diphosphate + anthranilate. The protein operates within amino-acid biosynthesis; L-tryptophan biosynthesis; L-tryptophan from chorismate: step 2/5. Catalyzes the transfer of the phosphoribosyl group of 5-phosphorylribose-1-pyrophosphate (PRPP) to anthranilate to yield N-(5'-phosphoribosyl)-anthranilate (PRA). This is Anthranilate phosphoribosyltransferase from Haloquadratum walsbyi (strain DSM 16790 / HBSQ001).